Reading from the N-terminus, the 216-residue chain is Pyridoxine/pyridoxamine 5'-phosphate oxidase (216 aa).

Substrate contacts are provided by residues 12–15 (RREY) and K70. FMN-binding positions include 65 to 70 (RVVLLK), 80 to 81 (YT), R86, K87, and Q109. Y127 and R131 together coordinate substrate. Residues 144–145 (QS) and W189 contribute to the FMN site. Residue 195-197 (RLH) participates in substrate binding. R199 is a binding site for FMN.

Belongs to the pyridoxamine 5'-phosphate oxidase family. In terms of assembly, homodimer. Requires FMN as cofactor.

It carries out the reaction pyridoxamine 5'-phosphate + O2 + H2O = pyridoxal 5'-phosphate + H2O2 + NH4(+). The catalysed reaction is pyridoxine 5'-phosphate + O2 = pyridoxal 5'-phosphate + H2O2. The protein operates within cofactor metabolism; pyridoxal 5'-phosphate salvage; pyridoxal 5'-phosphate from pyridoxamine 5'-phosphate: step 1/1. It participates in cofactor metabolism; pyridoxal 5'-phosphate salvage; pyridoxal 5'-phosphate from pyridoxine 5'-phosphate: step 1/1. In terms of biological role, catalyzes the oxidation of either pyridoxine 5'-phosphate (PNP) or pyridoxamine 5'-phosphate (PMP) into pyridoxal 5'-phosphate (PLP). This is Pyridoxine/pyridoxamine 5'-phosphate oxidase from Blochmanniella pennsylvanica (strain BPEN).